Consider the following 474-residue polypeptide: Nitrosuccinate lyase (474 aa).

The active-site Proton acceptor is Ser295. Residues Lys301 and Asn303 each coordinate fumarate. Residue Arg334 is the Proton donor of the active site.

The protein belongs to the class-II fumarase/aspartase family.

The enzyme catalyses 2-nitrobutanedioate = fumarate + nitrite + H(+). Functionally, involved in the biosynthesis of desferrioxamine derivatives which have iron-binding properties and may act as siderophores. Catalyzes the formation of nitrous acid from nitrosuccinic acid (2-nitrobutanedioate) by elimination of its nitro group. The chain is Nitrosuccinate lyase from Streptomyces davaonensis (strain DSM 101723 / JCM 4913 / KCC S-0913 / 768).